The following is a 165-amino-acid chain: Growth arrest and DNA damage-inducible protein GADD45 alpha (165 aa).

Phosphothreonine is present on Thr-2.

Belongs to the GADD45 family. In terms of assembly, interacts with AURKA, PCNA, GADD45GIP1 and MAPK14.

It localises to the nucleus. Might affect PCNA interaction with some CDK (cell division protein kinase) complexes; stimulates DNA excision repair in vitro and inhibits entry of cells into S phase. In T-cells, functions as a regulator of p38 MAPKs by inhibiting p88 phosphorylation and activity. This Cricetulus griseus (Chinese hamster) protein is Growth arrest and DNA damage-inducible protein GADD45 alpha (GADD45A).